We begin with the raw amino-acid sequence, 714 residues long: Kinesin-like protein KIN-13 (714 aa).

Residues 1 to 63 (MSDLVYQWLE…FRLITTLKSR (63 aa)) form the SAM domain. Residues 69-81 (QQPSAPNTGATPQ) show a composition bias toward polar residues. Disordered regions lie at residues 69–109 (QQPS…NDIQ) and 122–161 (GGYE…NPRG). The segment covering 82–92 (SVPSSHVSPHV) has biased composition (low complexity). The segment covering 151 to 160 (PNAPNPPNPR) has biased composition (pro residues). Residues 183 to 515 (RIRVVIRKRP…LRYADRVKEL (333 aa)) form the Kinesin motor domain. Residue 273–280 (GQTGSGKS) participates in ATP binding.

Belongs to the TRAFAC class myosin-kinesin ATPase superfamily. Kinesin family. KIN-13 subfamily. Interacts with PLK. Phosphorylated by PLK.

The protein localises to the cytoplasm. It is found in the cytoskeleton. The protein resides in the cell projection. Its subcellular location is the cilium. It localises to the flagellum. The protein localises to the flagellum basal body. It is found in the flagellum axoneme. The protein resides in the spindle. Its subcellular location is the chromosome. It localises to the centromere. The protein localises to the kinetochore. Functionally, involved in cell cycle. Involved in formation of flagella, regulation of flagellar length, and formation of median bodies during interphase. Regulates flagellar length in all eight distal flagellar tips by promoting disassembly of the microtubules. Disassembles microtubules at the distal flagellar tips in a length-dependent manner in order to maintain different equilibrium lengths of the four flagellar pairs. Regulates interphase and mitotic microtubule dynamics. Regulates microtubule disassembly dynamics of the dual mitotic spindles and the median body. The chain is Kinesin-like protein KIN-13 from Giardia intestinalis (strain ATCC 50803 / WB clone C6) (Giardia lamblia).